A 195-amino-acid chain; its full sequence is UPF0314 protein RHECIAT_CH0004233 (195 aa).

Helical transmembrane passes span 15–35, 64–84, 127–147, and 150–170; these read FWFV…YLMG, WYTP…YLIL, GDSI…FFFA, and APVA…GYVI.

Belongs to the UPF0314 family.

It is found in the cell membrane. The polypeptide is UPF0314 protein RHECIAT_CH0004233 (Rhizobium etli (strain CIAT 652)).